The primary structure comprises 270 residues: NAD kinase (270 aa).

Asp-49 functions as the Proton acceptor in the catalytic mechanism. NAD(+)-binding positions include 49–50 (DG), Arg-54, 126–127 (NE), Arg-152, Asp-154, 165–170 (TAYNKS), Ala-189, and Gln-227.

This sequence belongs to the NAD kinase family. The cofactor is a divalent metal cation.

Its subcellular location is the cytoplasm. It carries out the reaction NAD(+) + ATP = ADP + NADP(+) + H(+). Its function is as follows. Involved in the regulation of the intracellular balance of NAD and NADP, and is a key enzyme in the biosynthesis of NADP. Catalyzes specifically the phosphorylation on 2'-hydroxyl of the adenosine moiety of NAD to yield NADP. The sequence is that of NAD kinase from Lactococcus lactis subsp. lactis (strain IL1403) (Streptococcus lactis).